Consider the following 298-residue polypeptide: Leucine-rich repeat-containing protein 38 (298 aa).

The signal sequence occupies residues 1–31 (MSLCVAPRHPTGAAAALGLGSLLVLLGPGRA). Intrachain disulfides connect Cys-32/Cys-38 and Cys-36/Cys-46. The 29-residue stretch at 32–60 (CPAGCACTDPHTVDCRDRGLPSVPDPFPL) folds into the LRRNT domain. Topologically, residues 32-251 (CPAGCACTDP…ECKFSLSLTD (220 aa)) are extracellular. 5 LRR repeats span residues 61-82 (DVRK…FFIF), 85-106 (DLVY…TFSG), 109-130 (KLAF…AFRS), 133-154 (RLVK…AFES), and 157-177 (SLQV…AALD). N-linked (GlcNAc...) asparagine glycosylation is present at Asn-119. The region spanning 190-245 (NPWLCDCDFAHLFSWIQENTSKLPKGLDAIQCSLPMEDRRVALRELSEASFSECKF) is the LRRCT domain. 2 cysteine pairs are disulfide-bonded: Cys-194-Cys-221 and Cys-196-Cys-243. Residues 252–272 (LFIIIFSGVAVSIAAIISSFF) traverse the membrane as a helical segment. Topologically, residues 273 to 298 (LATVVQCFQRCAPNKDTEDEDDDEDD) are cytoplasmic.

Interacts with KCNMA1.

The protein localises to the cell membrane. Its function is as follows. Auxiliary protein of the large-conductance, voltage and calcium-activated potassium channel (BK alpha). Modulates gating properties by producing a marked shift in the BK channel's voltage dependence of activation in the hyperpolarizing direction, and in the absence of calcium. The sequence is that of Leucine-rich repeat-containing protein 38 (Lrrc38) from Mus musculus (Mouse).